We begin with the raw amino-acid sequence, 234 residues long: Staphylococcal superantigen-like 5 (234 aa).

An N-terminal signal peptide occupies residues 1–30 (MKMTAIAKASLALGILATGTITSLHQTVNA).

This sequence belongs to the staphylococcal/streptococcal toxin family. Interacts with host SELPLG; this interaction prevents SELPLG-mediated neutrophil rolling. Interacts with host MMP9 (via sialic acid-containing O-glycans); this interaction inhibits MMP9 activity. Interacts with host GP1BA and GP6; these interactions play an important role in platelet binding and activation.

Secreted protein that plays a role in the inhibition of host innate immune system. Modulates the interaction between host SELPLG and P-selectin thereby preventing initial rolling of neutrophils toward the site of infection. Interferes with leukocyte trafficking by inhibiting host metalloproteinase-9/MMP9 activity. Also associates with two different platelet surface receptors GP1A and GP6 leading to platelet activation and aggregation. This Staphylococcus aureus (strain NCTC 8325 / PS 47) protein is Staphylococcal superantigen-like 5.